Reading from the N-terminus, the 461-residue chain is D-phenylhydantoinase (461 aa).

Residues His-59, His-61, and Lys-151 each contribute to the a divalent metal cation site. At Lys-151 the chain carries N6-carboxylysine. Tyr-156 is a binding site for substrate. A divalent metal cation is bound by residues His-182 and His-239. Ser-286 provides a ligand contact to substrate. Residue Asp-313 coordinates a divalent metal cation. Asn-335 lines the substrate pocket.

This sequence belongs to the metallo-dependent hydrolases superfamily. Hydantoinase/dihydropyrimidinase family. In terms of assembly, homotetramer. A divalent metal cation is required as a cofactor. In terms of processing, carboxylation allows a single lysine to coordinate two divalent metal cations.

It catalyses the reaction D-5-phenylhydantoin + H2O = N-carbamoyl-D-phenylglycine + H(+). In terms of biological role, catalyzes the stereospecific hydrolysis of the cyclic amide bond of D-hydantoin derivatives with an aromatic side chains at the 5'-position. Has no activity on dihydropyrimidines. The physiological function is unknown. This Escherichia coli O9:H4 (strain HS) protein is D-phenylhydantoinase.